Consider the following 695-residue polypeptide: FMR1-interacting protein NUFIP2 (695 aa).

A disordered region spans residues Met-1 to Asn-100. Basic residues-rich tracts occupy residues Gln-11–Pro-23 and Pro-30–Gln-53. A Glycyl lysine isopeptide (Lys-Gly) (interchain with G-Cter in SUMO2) cross-link involves residue Lys-78. Residue Thr-87 is modified to Phosphothreonine. Lys-109 is covalently cross-linked (Glycyl lysine isopeptide (Lys-Gly) (interchain with G-Cter in SUMO2)). 2 positions are modified to phosphoserine: Ser-112 and Ser-113. Residues Lys-136, Lys-146, Lys-157, and Lys-171 each participate in a glycyl lysine isopeptide (Lys-Gly) (interchain with G-Cter in SUMO2) cross-link. Disordered stretches follow at residues Ile-155–Gly-189, Gly-204–Cys-234, Phe-261–Pro-341, and Thr-369–Pro-402. Residues Ser-159 to Asp-182 show a composition bias toward basic and acidic residues. 2 positions are modified to phosphoserine: Ser-212 and Ser-214. Phosphotyrosine is present on Tyr-218. Residues Thr-219 and Thr-220 each carry the phosphothreonine modification. Over residues Pro-221 to Ser-230 the composition is skewed to basic residues. The span at Phe-261–Gly-275 shows a compositional bias: basic and acidic residues. Glycyl lysine isopeptide (Lys-Gly) (interchain with G-Cter in SUMO2) cross-links involve residues Lys-262 and Lys-281. Arg-291 carries the post-translational modification Omega-N-methylarginine. Lys-293 is covalently cross-linked (Glycyl lysine isopeptide (Lys-Gly) (interchain with G-Cter in SUMO2)). Ser-304 is modified (phosphoserine). Lys-307 is covalently cross-linked (Glycyl lysine isopeptide (Lys-Gly) (interchain with G-Cter in SUMO2)). The segment covering Ser-373–Ser-396 has biased composition (low complexity). The residue at position 376 (Ser-376) is a Phosphoserine. The residue at position 571 (Thr-571) is a Phosphothreonine. 4 positions are modified to phosphoserine: Ser-572, Ser-592, Ser-608, and Ser-629. Thr-633 bears the Phosphothreonine mark. Phosphoserine occurs at positions 637, 652, 655, and 692.

As to quaternary structure, interacts with FMR1 (via N-terminus). Interacts with DDX6.

Its subcellular location is the nucleus. It localises to the cytoplasm. The protein resides in the stress granule. Functionally, binds RNA. This Homo sapiens (Human) protein is FMR1-interacting protein NUFIP2.